Reading from the N-terminus, the 250-residue chain is MSRRYDSRTTIFSPEGRLYQVEYAMEAIGNAGSAIGILSKDGVVLIGEKKVTSKLLQTSTSAEKMYKIDDHVACAVAGIMSDANILINTARVQAQRYTFMYQEPMPVEQLVQSLCDTKQGYTQFGGLRPFGVSFLFAGWDKHHGFQLYMSDPSGNYGGWKAAAVGANNQAAQSILKQDYKDDATREEAVELALKVLTKTMDSTSLTSEKLELAEVYLTPSKTVKYHVHSPESLTKLLVKHGVTQPAAETS.

Residues lysine 40 and lysine 64 each participate in a glycyl lysine isopeptide (Lys-Gly) (interchain with G-Cter in ubiquitin) cross-link.

The protein belongs to the peptidase T1A family. Component of the 20S core complex of the 26S proteasome. The 26S proteasome is composed of a core protease (CP), known as the 20S proteasome, capped at one or both ends by the 19S regulatory particle (RP/PA700). The 20S proteasome core is composed of 28 subunits that are arranged in four stacked rings, resulting in a barrel-shaped structure. The two end rings are each formed by seven alpha subunits, and the two central rings are each formed by seven beta subunits. The catalytic chamber with the active sites is on the inside of the barrel. As to expression, ubiquitous low levels, higher expression in siliques and flowers.

The protein resides in the cytoplasm. It is found in the nucleus. In terms of biological role, the proteasome is a multicatalytic proteinase complex which is characterized by its ability to cleave peptides with Arg, Phe, Tyr, Leu, and Glu adjacent to the leaving group at neutral or slightly basic pH. The proteasome has an ATP-dependent proteolytic activity. The protein is Proteasome subunit alpha type-4-A (PAC1) of Arabidopsis thaliana (Mouse-ear cress).